A 294-amino-acid chain; its full sequence is Small ribosomal subunit protein uS2 (294 aa).

Residues 256-274 show a composition bias toward basic and acidic residues; that stretch reads SGKFIMDEDPDSKKTKTAE. The disordered stretch occupies residues 256-294; sequence SGKFIMDEDPDSKKTKTAEEPSATIEPSTTTTVEVDQNE. Positions 280–294 are enriched in polar residues; it reads IEPSTTTTVEVDQNE.

This sequence belongs to the universal ribosomal protein uS2 family.

In Leptospira interrogans serogroup Icterohaemorrhagiae serovar Lai (strain 56601), this protein is Small ribosomal subunit protein uS2.